Reading from the N-terminus, the 469-residue chain is Keratin, type II cytoskeletal 7 (469 aa).

Residue Ser2 is modified to N-acetylserine. Phosphoserine is present on residues Ser2, Ser6, and Ser7. Positions 2–90 (SIHFSSPVFT…DPSLQRVRQE (89 aa)) are head. Ser12 is a glycosylation site (O-linked (GlcNAc) serine). The residue at position 20 (Arg20) is a Dimethylated arginine; alternate. Arg20 carries the omega-N-methylarginine; alternate modification. Phosphoserine occurs at positions 53, 71, and 83. The interval 90-126 (EEREQIKTLNNKFASFIDKVRFLEQQNKLLETKWTLL) is coil 1A. Residues 91–403 (EREQIKTLNN…KLLEGEESRL (313 aa)) enclose the IF rod domain. Position 97 is a phosphothreonine (Thr97). The segment at 127–144 (QEQKSAKSSRLPDIFEAQ) is linker 1. A Glycyl lysine isopeptide (Lys-Gly) (interchain with G-Cter in SUMO2) cross-link involves residue Lys130. The coil 1B stretch occupies residues 145 to 236 (IAGLRGQLEA…TLNETELTEL (92 aa)). The residue at position 179 (Lys179) is an N6-acetyllysine. The tract at residues 237–260 (QSQISDTSVVLSMDNSRSLDLDGI) is linker 12. Phosphoserine is present on residues Ser252 and Ser254. A coil 2 region spans residues 261-399 (IAEVKAQYEE…ATYRKLLEGE (139 aa)). Residues Lys265 and Lys286 each participate in a glycyl lysine isopeptide (Lys-Gly) (interchain with G-Cter in SUMO2) cross-link. Residue Thr289 is modified to Phosphothreonine. Glycyl lysine isopeptide (Lys-Gly) (interchain with G-Cter in SUMO2) cross-links involve residues Lys296 and Lys331. Residues 400–469 (ESRLAGDGVG…ASASRRSARN (70 aa)) are tail.

Belongs to the intermediate filament family. As to quaternary structure, heterotetramer of two type I and two type II keratins. Interacts with eukaryotic translation initiator factor 3 (eIF3) subunit EIF3S10. Interacts with GPER1. Post-translationally, arg-20 is dimethylated, probably to asymmetric dimethylarginine.

In terms of biological role, blocks interferon-dependent interphase and stimulates DNA synthesis in cells. This Pan troglodytes (Chimpanzee) protein is Keratin, type II cytoskeletal 7.